Reading from the N-terminus, the 211-residue chain is Protein-L-isoaspartate O-methyltransferase (211 aa).

Residue Ser60 is part of the active site.

Belongs to the methyltransferase superfamily. L-isoaspartyl/D-aspartyl protein methyltransferase family.

It localises to the cytoplasm. The catalysed reaction is [protein]-L-isoaspartate + S-adenosyl-L-methionine = [protein]-L-isoaspartate alpha-methyl ester + S-adenosyl-L-homocysteine. In terms of biological role, catalyzes the methyl esterification of L-isoaspartyl residues in peptides and proteins that result from spontaneous decomposition of normal L-aspartyl and L-asparaginyl residues. It plays a role in the repair and/or degradation of damaged proteins. This is Protein-L-isoaspartate O-methyltransferase from Pseudomonas fluorescens (strain Pf0-1).